A 556-amino-acid chain; its full sequence is Cell wall integrity and stress response component 3 (556 aa).

Positions 1–38 are cleaved as a signal peptide; it reads MERVWFAKLTNKGTIKIGYISFILLSLLCQSLIGLVNA. The 94-residue stretch at 39-132 folds into the WSC domain; sequence DFNYEGCYSA…SSYMNVYVNA (94 aa). Residues 39-384 are Extracellular-facing; the sequence is DFNYEGCYSA…QRLSGGAIAG (346 aa). N-linked (GlcNAc...) asparagine glycosylation occurs at asparagine 84. 2 stretches are compositionally biased toward low complexity: residues 142–169 and 184–257; these read SSSK…SSTT and TTVS…STTS. Disordered stretches follow at residues 142–257 and 269–312; these read SSSK…STTS and TLSS…PSTS. 2 N-linked (GlcNAc...) asparagine glycosylation sites follow: asparagine 367 and asparagine 370. Residues 385–405 form a helical membrane-spanning segment; sequence IVIGVVFGVIFIILILLFLIW. At 406–556 the chain is on the cytoplasmic side; it reads RRRKSHDQLD…LSSTVSHNRA (151 aa). Disordered stretches follow at residues 425–444 and 534–556; these read YSFG…SGTT and LQVV…HNRA. A compositionally biased stretch (polar residues) spans 546-556; it reads ELSSTVSHNRA.

The protein localises to the membrane. This Saccharomyces cerevisiae (strain ATCC 204508 / S288c) (Baker's yeast) protein is Cell wall integrity and stress response component 3 (WSC3).